A 118-amino-acid polypeptide reads, in one-letter code: Large ribosomal subunit protein bL19 (118 aa).

The protein belongs to the bacterial ribosomal protein bL19 family.

In terms of biological role, this protein is located at the 30S-50S ribosomal subunit interface and may play a role in the structure and function of the aminoacyl-tRNA binding site. This is Large ribosomal subunit protein bL19 from Alcanivorax borkumensis (strain ATCC 700651 / DSM 11573 / NCIMB 13689 / SK2).